The following is a 178-amino-acid chain: ATP-dependent protease subunit HslV (178 aa).

Threonine 5 is an active-site residue. Na(+) contacts are provided by glycine 161, cysteine 164, and threonine 167.

Belongs to the peptidase T1B family. HslV subfamily. In terms of assembly, a double ring-shaped homohexamer of HslV is capped on each side by a ring-shaped HslU homohexamer. The assembly of the HslU/HslV complex is dependent on binding of ATP.

The protein resides in the cytoplasm. It catalyses the reaction ATP-dependent cleavage of peptide bonds with broad specificity.. With respect to regulation, allosterically activated by HslU binding. Protease subunit of a proteasome-like degradation complex believed to be a general protein degrading machinery. The chain is ATP-dependent protease subunit HslV from Nitratiruptor sp. (strain SB155-2).